We begin with the raw amino-acid sequence, 267 residues long: Pro-opiomelanocortin (267 aa).

An N-terminal signal peptide occupies residues 1–26; it reads MPRSCCSRSGALLLALLLQASMEVRG. Cysteines 28 and 50 form a disulfide. A glycan (O-linked (HexNAc...) threonine) is linked at Thr71. Phe87 is modified (phenylalanine amide). Disordered regions lie at residues 88–175, 181–200, and 222–241; these read GRRN…FPLE, TGQRLREGDGPDGPADDGAG, and RMEHFRWGSPPKDKRYGGFM. Asn91 carries an N-linked (GlcNAc...) asparagine glycan. Residues 121–145 are compositionally biased toward basic and acidic residues; it reads PEPRSDGAKPGPREGKRSYSMEHFR. Glu134 carries the glutamic acid 1-amide modification. N-acetylserine; in Corticotropin is present on Ser138. A Valine amide modification is found at Val150. Position 168 is a phosphoserine (Ser168). Over residues 222–237 the composition is skewed to basic and acidic residues; sequence RMEHFRWGSPPKDKRY.

This sequence belongs to the POMC family. In terms of processing, specific enzymatic cleavages at paired basic residues yield the different active peptides. Post-translationally, O-glycosylated; reducing sugar is probably N-acetylgalactosamine. In terms of tissue distribution, ACTH and MSH are produced by the pituitary gland.

The protein localises to the secreted. Stimulates the adrenal glands to release cortisol. Functionally, anorexigenic peptide. Increases the pigmentation of skin by increasing melanin production in melanocytes. In terms of biological role, increases the pigmentation of skin by increasing melanin production in melanocytes. Its function is as follows. Endogenous orexigenic opiate. Endogenous opiate. The polypeptide is Pro-opiomelanocortin (POMC) (Homo sapiens (Human)).